The primary structure comprises 314 residues: MRMEAGEAAPPAGAGGRAAGGWGKWVRLNVGGTVFLTTRQTLCREQKSFLSRLCQGEELQSDRDETGAYLIDRDPTYFGPILNFLRHGKLVLDKDMAEEGVLEEAEFYNIGPLIRIIKDRMEEKDYTVTQVPPKHVYRVLQCQEEELTQMVSTMSDGWRFEQLVNIGSSYNYGSEDQAEFLCVVSKELHSTPNGLSSESSRKTKSTEEQLEEQQQQEEEVEEVEVEQVQVEADAQEKAQSSQDPANLFSLPPLPPPPLPAGGSRPHPLRPEAELAVRASPRPLARPQSCHPCCYKPEAPGCEAPDHLQGLGVPI.

The 71-residue stretch at Lys24 to Lys94 folds into the BTB domain. A disordered region spans residues Ser190–Leu268. A coiled-coil region spans residues Ser196–Gln239. A compositionally biased stretch (acidic residues) spans Glu208–Val225.

In terms of assembly, homopentamer; forms a closed pentamer. Interacts with CUL3; interaction is direct and forms a 5:5 heterodecamer. Interacts with TCHP. Interacts with CUL3, as part of the BCR(KCTD17) E3 ubiquitin ligase complex, at least composed of CUL3, KCTD17 and RBX1. In terms of tissue distribution, highly expressed in brain. Highest expression is observed in the putamen and the thalamus.

The protein localises to the cytoplasm. Substrate-adapter for CUL3-RING ubiquitin ligase complexes which mediates the ubiquitination and subsequent proteasomal degradation of TCHP, a protein involved in ciliogenesis down-regulation. Thereby, positively regulates ciliogenesis, playing a crucial role in the initial steps of axoneme extension. May also play a role in endoplasmic reticulum calcium ion homeostasis. The protein is BTB/POZ domain-containing protein KCTD17 of Homo sapiens (Human).